A 42-amino-acid chain; its full sequence is Photosystem I reaction center subunit IX (42 aa).

The helical transmembrane segment at 7 to 27 threads the bilayer; the sequence is YLSVAPVLSTLWFGALAGLLI.

This sequence belongs to the PsaJ family.

Its subcellular location is the plastid. It is found in the chloroplast thylakoid membrane. Functionally, may help in the organization of the PsaE and PsaF subunits. The chain is Photosystem I reaction center subunit IX from Platanus occidentalis (Sycamore).